A 448-amino-acid chain; its full sequence is MFPGQGRHTYGGQQSNYSNQQQGYDQGYNQGYGQAYGQEYNQGYDRPSGPPPGQGQYNRPSGPPPGPPPGQGQYNRPSGPPPSQQGQYNRPSGPPPGQYGNNQTRGSGNEQNYGNMHGSGHYSRPPTDSQSFGVENYNYQYSNCSGRKKALLIGINYIGTKNELRGPINDVNNVEQFLLANGYSSDNIVKLTDDQRVQRAIPTRQNILDAIQWLVKDARPNDALFFHYSGHGGQTEDQPDEYGNYDEDDGYDEVIYPLDFETNGFIIDDLLHTMMVKTLPQGCRLTALFDSCHSGSVLDLPYMYSTKGVLKEPNVMKEAGAGLLQSAMAYATGDRSRMLSGLGGVVKTFMNQGKAEKANEYSKQTNTAPCDAISLSGCKDDQTSADSKENGTATGAMSYAFLTVMSQNPNQSYLSLLQNMREILSAKYSQKPQLSASHPIDTNLQFIF.

The tract at residues 1–129 (MFPGQGRHTY…GHYSRPPTDS (129 aa)) is disordered. The span at 10 to 44 (YGGQQSNYSNQQQGYDQGYNQGYGQAYGQEYNQGY) shows a compositional bias: low complexity. The span at 61 to 70 (SGPPPGPPPG) shows a compositional bias: pro residues. Polar residues predominate over residues 99 to 114 (YGNNQTRGSGNEQNYG). Residues His231 and Cys292 contribute to the active site.

It belongs to the peptidase C14B family.

In terms of biological role, involved in cell death (apoptosis). This is Metacaspase-1 (MCA1) from Candida albicans (strain SC5314 / ATCC MYA-2876) (Yeast).